The sequence spans 533 residues: Probable polyamine oxidase 5 (533 aa).

Positions 37, 45, 262, and 501 each coordinate FAD.

It belongs to the flavin monoamine oxidase family. FAD serves as cofactor. In terms of tissue distribution, expressed in root vasculature, leaves and stems.

It localises to the cytoplasm. The catalysed reaction is spermine + O2 + H2O = 3-aminopropanal + spermidine + H2O2. It catalyses the reaction N(1)-acetylspermine + O2 + H2O = 3-acetamidopropanal + spermidine + H2O2. The enzyme catalyses norspermine + O2 + H2O = norspermidine + 3-aminopropanal + H2O2. It carries out the reaction thermospermine + O2 + H2O = 3-aminopropanal + spermidine + H2O2. It participates in amine and polyamine degradation; spermine degradation. Its function is as follows. Flavoenzyme involved in polyamine back-conversion. Catalyzes the oxidation of the secondary amino group of polyamines, such as spermine and its acetyl derivatives. Substrate preference is spermine &gt; N(1)-acetylspermine &gt; thermospermine &gt; norspermine. Plays an important role in the regulation of polyamine intracellular concentration. Involved in xylem differentiation by controlling thermospermine homeostasis, and participating in the tightly controlled interplay between auxin and cytokinin that is necessary for proper xylem differentiation. Involved in the production of hydrogen peroxide in response to salt and cold stresses. The polypeptide is Probable polyamine oxidase 5 (Arabidopsis thaliana (Mouse-ear cress)).